The chain runs to 301 residues: Glycine--tRNA ligase alpha subunit (301 aa).

Belongs to the class-II aminoacyl-tRNA synthetase family. In terms of assembly, tetramer of two alpha and two beta subunits.

The protein localises to the cytoplasm. It catalyses the reaction tRNA(Gly) + glycine + ATP = glycyl-tRNA(Gly) + AMP + diphosphate. In Shewanella halifaxensis (strain HAW-EB4), this protein is Glycine--tRNA ligase alpha subunit.